The chain runs to 435 residues: Cyclin-J-like protein (435 aa).

Residues 14 to 191 (DVHCTLREKE…LLEAFSWNLC (178 aa)) form the Cyclin N-terminal domain. The tract at residues 120 to 142 (SSNSPASAPHPPPTPPQVAETTG) is disordered.

Belongs to the cyclin family. Cyclin J subfamily.

This Homo sapiens (Human) protein is Cyclin-J-like protein (CCNJL).